A 172-amino-acid polypeptide reads, in one-letter code: MAKPTVNINQAIRAREVRVVGADSEQLGIMSLQEALALAEARQLDLVEVSPTAVPPVCRIMDYGKFKYQQSKKLQEARKKQSHVQVKEVKLRPKTDEHDLMTKIKHVRRFIEEGNKAKVTLVFRGREITHLEFGSRALDRVAAELEDIAVVEFKPKMEGRSMFMIVAPKVKK.

This sequence belongs to the IF-3 family. As to quaternary structure, monomer.

The protein resides in the cytoplasm. Functionally, IF-3 binds to the 30S ribosomal subunit and shifts the equilibrium between 70S ribosomes and their 50S and 30S subunits in favor of the free subunits, thus enhancing the availability of 30S subunits on which protein synthesis initiation begins. The protein is Translation initiation factor IF-3 of Geobacter sulfurreducens (strain ATCC 51573 / DSM 12127 / PCA).